The sequence spans 206 residues: LysM and putative peptidoglycan-binding domain-containing protein 2 (206 aa).

The 45-residue stretch at 59 to 103 (IEHCLSPSDTLQGIALKYGVTMEQIKRANKLFSTDCIFLRKSLNI) folds into the LysM domain. Residues 184–206 (AQRLKEEDDLRHDGSYATCSYQH) are disordered. The span at 186–197 (RLKEEDDLRHDG) shows a compositional bias: basic and acidic residues.

This Xenopus laevis (African clawed frog) protein is LysM and putative peptidoglycan-binding domain-containing protein 2 (lysmd2).